We begin with the raw amino-acid sequence, 444 residues long: Probable glycine dehydrogenase (decarboxylating) subunit 1 (444 aa).

It belongs to the GcvP family. N-terminal subunit subfamily. As to quaternary structure, the glycine cleavage system is composed of four proteins: P, T, L and H. In this organism, the P 'protein' is a heterodimer of two subunits.

It carries out the reaction N(6)-[(R)-lipoyl]-L-lysyl-[glycine-cleavage complex H protein] + glycine + H(+) = N(6)-[(R)-S(8)-aminomethyldihydrolipoyl]-L-lysyl-[glycine-cleavage complex H protein] + CO2. Its function is as follows. The glycine cleavage system catalyzes the degradation of glycine. The P protein binds the alpha-amino group of glycine through its pyridoxal phosphate cofactor; CO(2) is released and the remaining methylamine moiety is then transferred to the lipoamide cofactor of the H protein. The protein is Probable glycine dehydrogenase (decarboxylating) subunit 1 of Chlorobaculum parvum (strain DSM 263 / NCIMB 8327) (Chlorobium vibrioforme subsp. thiosulfatophilum).